The chain runs to 232 residues: MKNYDEWAHVFKLDPNKEITDEALEAVCESGTDAIIVGGTDNVTLDNTLSLFARIRRFPVTCALEVSDLEAITPGFDYYLIPSVMNSQHVSWVIGHHHKAVKEYGEIINWQELLLEGYCVLNGEARVANHANAQTDLDIEDVVAYARLAEHMYRYPFFYLEYSGKKGPIDVVKRASAVLEKTKLIYGGGIKNAADASEIAAYADVVVVGNGLYENLKEALKTVEAVKEHKCR.

Residue Lys-12 participates in sn-glycerol 1-phosphate binding. Mg(2+)-binding residues include Asp-14 and Thr-40. Residues 159 to 164 (YLEYSG), Gly-189, and 209 to 210 (GN) contribute to the sn-glycerol 1-phosphate site.

Belongs to the GGGP/HepGP synthase family. Group I subfamily. In terms of assembly, homodimer. Mg(2+) is required as a cofactor.

It catalyses the reaction sn-glycerol 1-phosphate + all-trans-heptaprenyl diphosphate = 3-heptaprenyl-sn-glycero-1-phosphate + diphosphate. It functions in the pathway membrane lipid metabolism; glycerophospholipid metabolism. Functionally, prenyltransferase that catalyzes in vivo the transfer of the heptaprenyl moiety of heptaprenyl pyrophosphate (HepPP; 35 carbon atoms) to the C3 hydroxyl of sn-glycerol-1-phosphate (G1P), producing heptaprenylglyceryl phosphate (HepGP). This reaction is an ether-bond-formation step in the biosynthesis of archaea-type G1P-based membrane lipids found in Bacillales. This is Heptaprenylglyceryl phosphate synthase from Shouchella clausii (strain KSM-K16) (Alkalihalobacillus clausii).